Here is a 513-residue protein sequence, read N- to C-terminus: MQLNSTEISELIKQRIAQFNVVSEAHNEGTIVSVSDGVIRIHGLADCMQGEMISLPGNRYAIALNLERDSVGAVVMGPYADLAEGMKVKCTGRILEVPVGRGLLGRVVNTLGAPIDGKGPVDNDGFSAVEAIAPGVIDRQSVDQPVQTGYKAVDSMIPIGRGQRELIIGDRQTGKTALAIDAIINQRDSGIKCIYVAIGQKASTISNVVRKLEEHGALANTIVVVATASESAALQYLAPYAGCAMGEYFRDRGEDALIIYDDLSKQAVAYRQISLLLRRPPGREAFPGDVFYLHSRLLERAARVNADYVEAFTKGEVKGKTGSLTALPIIETQAGDVSAFVPTNVISITDGQIFLESNLFNAGIRPAVNPGISVSRVGGAAQTKIMKKLSGGIRTALAQYRELAAFSQFASDLDDATRKQLDHGQKVTELLKQKQYAPMSVAQQSLVLFAAERGYLADVELAKIGSFEAALLAYVDRDHAPLMQEINQSGGYNDEIEGKLKGILDSFKATQSW.

Position 169–176 (169–176 (GDRQTGKT)) interacts with ATP.

It belongs to the ATPase alpha/beta chains family. F-type ATPases have 2 components, CF(1) - the catalytic core - and CF(0) - the membrane proton channel. CF(1) has five subunits: alpha(3), beta(3), gamma(1), delta(1), epsilon(1). CF(0) has three main subunits: a(1), b(2) and c(9-12). The alpha and beta chains form an alternating ring which encloses part of the gamma chain. CF(1) is attached to CF(0) by a central stalk formed by the gamma and epsilon chains, while a peripheral stalk is formed by the delta and b chains.

The protein resides in the cell inner membrane. It catalyses the reaction ATP + H2O + 4 H(+)(in) = ADP + phosphate + 5 H(+)(out). In terms of biological role, produces ATP from ADP in the presence of a proton gradient across the membrane. The alpha chain is a regulatory subunit. The protein is ATP synthase subunit alpha of Salmonella agona (strain SL483).